Consider the following 507-residue polypeptide: ATP synthase subunit alpha, mitochondrial (507 aa).

Residue 171 to 178 (GDRQTGKT) participates in ATP binding.

This sequence belongs to the ATPase alpha/beta chains family. As to quaternary structure, F-type ATPases have 2 components, CF(1) - the catalytic core - and CF(0) - the membrane proton channel. CF(1) has five subunits: alpha(3), beta(3), gamma(1), delta(1), epsilon(1). CF(0) has three main subunits: a, b and c.

It is found in the mitochondrion. Its subcellular location is the mitochondrion inner membrane. Mitochondrial membrane ATP synthase (F(1)F(0) ATP synthase or Complex V) produces ATP from ADP in the presence of a proton gradient across the membrane which is generated by electron transport complexes of the respiratory chain. F-type ATPases consist of two structural domains, F(1) - containing the extramembraneous catalytic core, and F(0) - containing the membrane proton channel, linked together by a central stalk and a peripheral stalk. During catalysis, ATP synthesis in the catalytic domain of F(1) is coupled via a rotary mechanism of the central stalk subunits to proton translocation. Subunits alpha and beta form the catalytic core in F(1). Rotation of the central stalk against the surrounding alpha(3)beta(3) subunits leads to hydrolysis of ATP in three separate catalytic sites on the beta subunits. Subunit alpha does not bear the catalytic high-affinity ATP-binding sites. This chain is ATP synthase subunit alpha, mitochondrial (ATPA), found in Brassica napus (Rape).